Here is a 493-residue protein sequence, read N- to C-terminus: Glutamyl-tRNA(Gln) amidotransferase subunit A (493 aa).

Active-site charge relay system residues include Lys-79 and Ser-159. Ser-183 (acyl-ester intermediate) is an active-site residue.

It belongs to the amidase family. GatA subfamily. Heterotrimer of A, B and C subunits.

It catalyses the reaction L-glutamyl-tRNA(Gln) + L-glutamine + ATP + H2O = L-glutaminyl-tRNA(Gln) + L-glutamate + ADP + phosphate + H(+). In terms of biological role, allows the formation of correctly charged Gln-tRNA(Gln) through the transamidation of misacylated Glu-tRNA(Gln) in organisms which lack glutaminyl-tRNA synthetase. The reaction takes place in the presence of glutamine and ATP through an activated gamma-phospho-Glu-tRNA(Gln). The polypeptide is Glutamyl-tRNA(Gln) amidotransferase subunit A (Brucella melitensis biotype 2 (strain ATCC 23457)).